A 147-amino-acid polypeptide reads, in one-letter code: Large ribosomal subunit protein bL9 (147 aa).

This sequence belongs to the bacterial ribosomal protein bL9 family.

Its function is as follows. Binds to the 23S rRNA. The chain is Large ribosomal subunit protein bL9 from Geotalea daltonii (strain DSM 22248 / JCM 15807 / FRC-32) (Geobacter daltonii).